Reading from the N-terminus, the 279-residue chain is 3-methyl-2-oxobutanoate hydroxymethyltransferase (279 aa).

Residues Asp43 and Asp82 each contribute to the Mg(2+) site. 3-methyl-2-oxobutanoate is bound by residues 43-44 (DS), Asp82, and Lys112. Glu114 provides a ligand contact to Mg(2+). Glu181 acts as the Proton acceptor in catalysis.

It belongs to the PanB family. In terms of assembly, homodecamer; pentamer of dimers. Mg(2+) is required as a cofactor.

Its subcellular location is the cytoplasm. The catalysed reaction is 3-methyl-2-oxobutanoate + (6R)-5,10-methylene-5,6,7,8-tetrahydrofolate + H2O = 2-dehydropantoate + (6S)-5,6,7,8-tetrahydrofolate. Its pathway is cofactor biosynthesis; (R)-pantothenate biosynthesis; (R)-pantoate from 3-methyl-2-oxobutanoate: step 1/2. In terms of biological role, catalyzes the reversible reaction in which hydroxymethyl group from 5,10-methylenetetrahydrofolate is transferred onto alpha-ketoisovalerate to form ketopantoate. This Lysinibacillus sphaericus (strain C3-41) protein is 3-methyl-2-oxobutanoate hydroxymethyltransferase.